The sequence spans 144 residues: MYLNTLAPAEGAKHSAKRLGRGIGSGLGKTGGRGHKGQKSRTGGGVRRGFEGGQMPLYRRLPKFGFTSMKAAVTAEIRLNDLTKVENNVVTLESLKAANIITKDIQFAKVVLAGEVKGAVTVRGLRVTKGAKAAIEAAGGSVEE.

Positions 1–53 are disordered; the sequence is MYLNTLAPAEGAKHSAKRLGRGIGSGLGKTGGRGHKGQKSRTGGGVRRGFEGG. The span at 21–31 shows a compositional bias: gly residues; sequence RGIGSGLGKTG.

This sequence belongs to the universal ribosomal protein uL15 family. In terms of assembly, part of the 50S ribosomal subunit.

Its function is as follows. Binds to the 23S rRNA. This Mannheimia succiniciproducens (strain KCTC 0769BP / MBEL55E) protein is Large ribosomal subunit protein uL15.